The sequence spans 179 residues: Large ribosomal subunit protein uL5 (179 aa).

It belongs to the universal ribosomal protein uL5 family. Part of the 50S ribosomal subunit; part of the 5S rRNA/L5/L18/L25 subcomplex. Contacts the 5S rRNA and the P site tRNA. Forms a bridge to the 30S subunit in the 70S ribosome.

This is one of the proteins that bind and probably mediate the attachment of the 5S RNA into the large ribosomal subunit, where it forms part of the central protuberance. In the 70S ribosome it contacts protein S13 of the 30S subunit (bridge B1b), connecting the 2 subunits; this bridge is implicated in subunit movement. Contacts the P site tRNA; the 5S rRNA and some of its associated proteins might help stabilize positioning of ribosome-bound tRNAs. The protein is Large ribosomal subunit protein uL5 of Herpetosiphon aurantiacus (strain ATCC 23779 / DSM 785 / 114-95).